The sequence spans 357 residues: Probable cinnamyl alcohol dehydrogenase 2 (357 aa).

Cys47 lines the Zn(2+) pocket. Ser49 contributes to the NADP(+) binding site. The Zn(2+) site is built by His69, Glu70, Cys100, Cys103, Cys106, Cys114, and Cys163. NADP(+) contacts are provided by residues Thr167, 188–193 (GLGGVG), 211–216 (SSSNKK), Thr251, Gly275, and 298–300 (SFI).

It belongs to the zinc-containing alcohol dehydrogenase family. As to quaternary structure, homodimer. Zn(2+) serves as cofactor. In terms of processing, the N-terminus is blocked.

It carries out the reaction (E)-cinnamyl alcohol + NADP(+) = (E)-cinnamaldehyde + NADPH + H(+). The enzyme catalyses (E)-coniferol + NADP(+) = (E)-coniferaldehyde + NADPH + H(+). The catalysed reaction is (E)-sinapyl alcohol + NADP(+) = (E)-sinapaldehyde + NADPH + H(+). It catalyses the reaction (E)-4-coumaroyl alcohol + NADP(+) = (E)-4-coumaraldehyde + NADPH + H(+). It carries out the reaction (E)-caffeyl alcohol + NADP(+) = (E)-caffeyl aldehyde + NADPH + H(+). Its pathway is aromatic compound metabolism; phenylpropanoid biosynthesis. In terms of biological role, involved in lignin biosynthesis. Catalyzes the final step specific for the production of lignin monomers. Catalyzes the NADPH-dependent reduction of coniferaldehyde, 5-hydroxyconiferaldehyde, sinapaldehyde, 4-coumaraldehyde and caffeyl aldehyde to their respective alcohols. The polypeptide is Probable cinnamyl alcohol dehydrogenase 2 (CAD19) (Nicotiana tabacum (Common tobacco)).